The following is a 702-amino-acid chain: Heparin-sulfate lyase (702 aa).

Residues methionine 1–glycine 17 form the signal peptide. The active-site Proton acceptor is the tyrosine 314.

This sequence belongs to the polysaccharide lyase 12 family.

Its subcellular location is the periplasm. It carries out the reaction Elimination of sulfate, appears to act on linkages between N-acetyl-D-glucosamine and uronate. Product is an unsaturated sugar.. Its function is as follows. Specifically cleaves heparan sulfate-rich regions of acidic polysaccharides. Does not act on N,O-desulfated glucosamine or N-acetyl-O-sulfated glucosamine linkages. Functions in cleaving metazoan heparan sulfate and providing carbon, nitrogen and sulfate sources for microorganisms. This is Heparin-sulfate lyase (hepC) from Bacteroides thetaiotaomicron (strain ATCC 29148 / DSM 2079 / JCM 5827 / CCUG 10774 / NCTC 10582 / VPI-5482 / E50).